Reading from the N-terminus, the 40-residue chain is Photosystem II reaction center protein L (40 aa).

The helical transmembrane segment at 19 to 39 (SLFLGLLLVFVLGILFSSYFF) threads the bilayer.

This sequence belongs to the PsbL family. As to quaternary structure, PSII is composed of 1 copy each of membrane proteins PsbA, PsbB, PsbC, PsbD, PsbE, PsbF, PsbH, PsbI, PsbJ, PsbK, PsbL, PsbM, PsbT, PsbX, PsbY, PsbZ, Psb30/Ycf12, peripheral proteins PsbO, CyanoQ (PsbQ), PsbU, PsbV and a large number of cofactors. It forms dimeric complexes.

The protein localises to the cellular thylakoid membrane. In terms of biological role, one of the components of the core complex of photosystem II (PSII). PSII is a light-driven water:plastoquinone oxidoreductase that uses light energy to abstract electrons from H(2)O, generating O(2) and a proton gradient subsequently used for ATP formation. It consists of a core antenna complex that captures photons, and an electron transfer chain that converts photonic excitation into a charge separation. This subunit is found at the monomer-monomer interface and is required for correct PSII assembly and/or dimerization. This chain is Photosystem II reaction center protein L, found in Synechococcus elongatus (strain ATCC 33912 / PCC 7942 / FACHB-805) (Anacystis nidulans R2).